Reading from the N-terminus, the 54-residue chain is Large ribosomal subunit protein bL33 (54 aa).

Belongs to the bacterial ribosomal protein bL33 family.

This is Large ribosomal subunit protein bL33 from Corynebacterium urealyticum (strain ATCC 43042 / DSM 7109).